Consider the following 81-residue polypeptide: Delta-conotoxin PVIA (81 aa).

Positions 1–22 (MKLTCVMIVAVLFLTAWTFVTA) are cleaved as a signal peptide. Positions 23–49 (DDSKNGLENHFWKARDEMKNREASKLD) are excised as a propeptide. 3 disulfides stabilise this stretch: Cys-54/Cys-69, Cys-61/Cys-73, and Cys-68/Cys-78. 4-hydroxyproline occurs at positions 57 and 65. Gly-80 bears the Glycine amide; in form delta-conotoxin PVIA mark.

The difference between delta-conotoxin PVIA and [deamido]-delta-conotoxin PVIA lies in the state of amidation of Gly-80. In terms of tissue distribution, expressed by the venom duct.

The protein localises to the secreted. In terms of biological role, delta-conotoxins bind to site 6 of voltage-gated sodium channels (Nav) and inhibit the inactivation process. This toxin shows weak effects on rNav1.2/SCN2A (EC(50)=2.9 uM), rNav1.4/SCN4A (EC(50)=5.2 uM), hNav1.7/SCN9A (EC(50)=1.9 uM) and rNav1.7/SCN9A (EC(50)=6.4 uM). In vivo, this toxin shows different effects. In mice, injection of this toxin causes hyperactivity, rapid running, limb extension, and death. In fish, the peptide elicites spurts of rapid swimming, with twisted motions, quivering fins and the lockjaw extended mouth syndrome. Rigid paralysis and death are observed at higher doses. In mollusks, this peptide is inactive. Injection of this peptide together with the kappa-conotoxin PVIIA causes the sudden tetanus of prey (STOP) syndrome, which is a single, lethal 'fin-pop' in envenomed fish. This chain is Delta-conotoxin PVIA, found in Conus purpurascens (Purple cone).